The sequence spans 197 residues: Probable chemoreceptor glutamine deamidase CheD 2 (197 aa).

This sequence belongs to the CheD family.

It carries out the reaction L-glutaminyl-[protein] + H2O = L-glutamyl-[protein] + NH4(+). Functionally, probably deamidates glutamine residues to glutamate on methyl-accepting chemotaxis receptors (MCPs), playing an important role in chemotaxis. This is Probable chemoreceptor glutamine deamidase CheD 2 from Dechloromonas aromatica (strain RCB).